Here is a 270-residue protein sequence, read N- to C-terminus: Phosphatidylglycerol--prolipoprotein diacylglyceryl transferase (270 aa).

The next 4 membrane-spanning stretches (helical) occupy residues 19-39 (FPVYWYGIIIGTGVLLGLWLA), 56-76 (LVLIAVPIAILFARMYYVIFE), 92-112 (QGGLAIHGGLIGAVITGVLFA), and 116-136 (GLSFWKLADIAAPSILLGQAI). Arg-138 lines the a 1,2-diacyl-sn-glycero-3-phospho-(1'-sn-glycerol) pocket. Transmembrane regions (helical) follow at residues 178-198 (HPTFLYESLWNFAGVILLLAL), 206-226 (GELFFTYLIWYSVGRFFVEGL), and 236-256 (LRIAQVMSIGLVVISIIFIIV).

This sequence belongs to the Lgt family.

The protein localises to the cell membrane. It catalyses the reaction L-cysteinyl-[prolipoprotein] + a 1,2-diacyl-sn-glycero-3-phospho-(1'-sn-glycerol) = an S-1,2-diacyl-sn-glyceryl-L-cysteinyl-[prolipoprotein] + sn-glycerol 1-phosphate + H(+). It functions in the pathway protein modification; lipoprotein biosynthesis (diacylglyceryl transfer). Catalyzes the transfer of the diacylglyceryl group from phosphatidylglycerol to the sulfhydryl group of the N-terminal cysteine of a prolipoprotein, the first step in the formation of mature lipoproteins. The polypeptide is Phosphatidylglycerol--prolipoprotein diacylglyceryl transferase (Bacillus cereus (strain ATCC 14579 / DSM 31 / CCUG 7414 / JCM 2152 / NBRC 15305 / NCIMB 9373 / NCTC 2599 / NRRL B-3711)).